The sequence spans 206 residues: Large ribosomal subunit protein uL4 (206 aa).

The segment at 43 to 78 (ARSGNRKQKDREEVKHTTKKPWRQKGTGRARAGMSS) is disordered. Positions 49–58 (KQKDREEVKH) are enriched in basic and acidic residues. Positions 59–70 (TTKKPWRQKGTG) are enriched in basic residues.

It belongs to the universal ribosomal protein uL4 family. In terms of assembly, part of the 50S ribosomal subunit.

One of the primary rRNA binding proteins, this protein initially binds near the 5'-end of the 23S rRNA. It is important during the early stages of 50S assembly. It makes multiple contacts with different domains of the 23S rRNA in the assembled 50S subunit and ribosome. Its function is as follows. Forms part of the polypeptide exit tunnel. This Ralstonia nicotianae (strain ATCC BAA-1114 / GMI1000) (Ralstonia solanacearum) protein is Large ribosomal subunit protein uL4.